The following is a 1601-amino-acid chain: Polycomb group protein Psc (1601 aa).

Disordered stretches follow at residues 1-91 (MMTP…TTTT) and 165-245 (NGIK…DLAT). Low complexity-rich tracts occupy residues 8–91 (AIQP…TTTT) and 182–198 (SSSSSSSSSSSSSSSSS). The segment covering 199–215 (WPTTRRATSEDASSNGG) has biased composition (polar residues). Low complexity predominate over residues 228 to 245 (TAAVAASSTATTTSDLAT). The RING-type zinc-finger motif lies at 263–302 (CHLCQGYLINATTIVECLHSFCHSCLINHLRKERFCPRCE). Disordered regions lie at residues 561 to 693 (KREK…FSED), 711 to 856 (VESP…NRTP), 895 to 960 (IGGG…SNNY), 1011 to 1097 (YKYT…EKQQ), 1116 to 1315 (SITI…LAPK), 1330 to 1408 (NPAA…HPVM), and 1512 to 1601 (AATG…TKSK). Over residues 567–590 (SPQMSSKSSSKSSPCTPVSSPSEP) the composition is skewed to low complexity. Basic and acidic residues predominate over residues 611–637 (DPERREIVKPLKPEKESRSKKKDKDGS). Over residues 638–649 (PKSSSSSSSSSS) the composition is skewed to low complexity. Phosphoserine is present on residues Ser656 and Ser658. Residues 676–689 (SGVSTLSPRVTSGA) are compositionally biased toward polar residues. A compositionally biased stretch (low complexity) spans 729 to 739 (SVQQSASPKSK). The segment covering 812-822 (LMPPPAKPPML) has biased composition (pro residues). A compositionally biased stretch (polar residues) spans 929-938 (TTPSQGNKNV). Over residues 1011-1022 (YKYTPKPTPNSG) the composition is skewed to low complexity. The span at 1036–1045 (LGGGNGGSLG) shows a compositional bias: gly residues. The segment covering 1069–1085 (SSATQSGGNNGIVNNNI) has biased composition (low complexity). A compositionally biased stretch (polar residues) spans 1116-1133 (SITISRDNGDSSSPNNGQ). Position 1139 is a phosphoserine (Ser1139). Pro residues predominate over residues 1204 to 1217 (PQLPKVATPPPPSS). Thr1222, Thr1236, and Thr1251 each carry phosphothreonine. A compositionally biased stretch (basic and acidic residues) spans 1247–1258 (VDKKTPSPEKRT). 3 positions are modified to phosphoserine: Ser1253, Ser1266, and Ser1274. Residues 1261 to 1272 (QMGSHSPTASEN) are compositionally biased toward polar residues. Composition is skewed to polar residues over residues 1352–1375 (QSGQQKLVNGGQSQPAQQKTSPPA) and 1561–1587 (APQTKGNSSSGAANARQQTAATGNNGA).

Component of PRC1 complex, which contains many PcG proteins like Pc, ph, Scm, Psc, Sce and also chromatin-remodeling proteins such as histone deacetylases. This complex is distinct from the Esc/E(z) complex, at least composed of esc, E(z), Su(z)12, HDAC1/Rpd3 and Caf1-55. The 2 complexes however cooperate and interact together during the first 3 hours of development to establish PcG silencing.

The protein resides in the nucleus. Functionally, polycomb group (PcG) protein. PcG proteins act by forming multiprotein complexes, which are required to maintain the transcriptionally repressive state of homeotic genes throughout development. PcG proteins are not required to initiate repression, but to maintain it during later stages of development. Component of the PcG multiprotein PRC1 complex, a complex that acts via chromatin remodeling and modification of histones; it mediates monoubiquitination of histone H2A 'Lys-118', rendering chromatin heritably changed in its expressibility. Needed to maintain expression patterns of the homeotic selector genes of the Antennapedia (Antp-C) and Bithorax (BX-C) complexes, and hence for the maintenance of segmental determination. The polypeptide is Polycomb group protein Psc (Psc) (Drosophila melanogaster (Fruit fly)).